We begin with the raw amino-acid sequence, 221 residues long: Iron-sulfur cluster repair protein YtfE (221 aa).

It belongs to the RIC family. YtfE subfamily. In terms of assembly, homodimer.

The protein resides in the cytoplasm. In terms of biological role, di-iron-containing protein involved in the repair of iron-sulfur clusters damaged by oxidative and nitrosative stress conditions. This is Iron-sulfur cluster repair protein YtfE from Yersinia pseudotuberculosis serotype IB (strain PB1/+).